The following is a 349-amino-acid chain: RxLR effector protein CRE15 (349 aa).

Residues 1 to 33 (MITFKRLSSARWGALLTSIAVLFFLAITKGADA) form the signal peptide. The short motif at 46–62 (RRLRTTTADAYYASEDR) is the RxLR-dEER element.

The protein belongs to the RxLR effector family. Interacts directly with the potato ortholog of vascular highway 1 (VH1)-interacting kinase (VIK), encoding a predicted MEK kinase (MAP3K).

It localises to the secreted. It is found in the host cell membrane. Its function is as follows. Effector that promotes P.infestans virulence in Nicotiana benthamiana and potato. Attenuates cell death triggered by the pathogen-associated molecular pattern infestin 1 (INF1), indicating that the effector suppresses pattern-triggered immunity. However, it does not attenuate cell death triggered by a range of resistance proteins, suggesting that it specifically suppresses INF1-triggered cell death (ICD). Targets host MAP3K VIK in order to utilize or promote its ability to negatively regulate immunity. The protein is RxLR effector protein CRE15 of Phytophthora infestans (strain T30-4) (Potato late blight agent).